We begin with the raw amino-acid sequence, 233 residues long: Probable GTP-binding protein EngB (233 aa).

Positions 23-209 constitute an EngB-type G domain; that stretch reads AVPEVAFAGR…QRIVAGWLCL (187 aa). GTP is bound by residues 31 to 38, 58 to 62, 82 to 85, 149 to 152, and 188 to 190; these read GRSNAGKS, GRTQH, DLPG, TKAD, and FSS. Residues Ser-38 and Thr-60 each contribute to the Mg(2+) site.

This sequence belongs to the TRAFAC class TrmE-Era-EngA-EngB-Septin-like GTPase superfamily. EngB GTPase family. The cofactor is Mg(2+).

In terms of biological role, necessary for normal cell division and for the maintenance of normal septation. The protein is Probable GTP-binding protein EngB of Ralstonia pickettii (strain 12J).